The following is a 360-amino-acid chain: Geranylgeranyl pyrophosphate synthase 3, chloroplastic (360 aa).

Residues 1-39 constitute a chloroplast transit peptide; it reads MATTVHLSSFSLFIQSRGRRDNSISSVKSLKKRTGLSPS. The segment at 24–54 is disordered; it reads ISSVKSLKKRTGLSPSSALTSQGGRDMIPPE. The segment covering 36–46 has biased composition (polar residues); sequence LSPSSALTSQG. Isopentenyl diphosphate contacts are provided by Lys106, Arg109, and His138. Mg(2+) is bound by residues Asp145 and Asp151. A dimethylallyl diphosphate-binding site is contributed by Arg156. Arg157 contacts isopentenyl diphosphate. Dimethylallyl diphosphate-binding residues include Lys245, Thr246, Gln283, Lys300, and Lys310.

Belongs to the FPP/GGPP synthase family. In terms of assembly, monomer. Mg(2+) is required as a cofactor. As to expression, mainly expressed in roots.

The protein localises to the plastid. Its subcellular location is the chloroplast. The enzyme catalyses isopentenyl diphosphate + dimethylallyl diphosphate = (2E)-geranyl diphosphate + diphosphate. It catalyses the reaction isopentenyl diphosphate + (2E)-geranyl diphosphate = (2E,6E)-farnesyl diphosphate + diphosphate. It carries out the reaction isopentenyl diphosphate + (2E,6E)-farnesyl diphosphate = (2E,6E,10E)-geranylgeranyl diphosphate + diphosphate. The protein operates within isoprenoid biosynthesis; farnesyl diphosphate biosynthesis; farnesyl diphosphate from geranyl diphosphate and isopentenyl diphosphate: step 1/1. It participates in isoprenoid biosynthesis; geranyl diphosphate biosynthesis; geranyl diphosphate from dimethylallyl diphosphate and isopentenyl diphosphate: step 1/1. Its pathway is isoprenoid biosynthesis; geranylgeranyl diphosphate biosynthesis; geranylgeranyl diphosphate from farnesyl diphosphate and isopentenyl diphosphate: step 1/1. Functionally, catalyzes the trans-addition of the three molecules of IPP onto DMAPP to form geranylgeranyl pyrophosphate. The protein is Geranylgeranyl pyrophosphate synthase 3, chloroplastic (GGPP3) of Arabidopsis thaliana (Mouse-ear cress).